We begin with the raw amino-acid sequence, 159 residues long: Phosphopantetheine adenylyltransferase (159 aa).

Position 8 (S8) interacts with substrate. Residues 8–9 and H16 each bind ATP; that span reads SF. K40, V72, and R86 together coordinate substrate. Residues 87–89, E97, and 122–128 each bind ATP; these read GVR and YAALRSS.

This sequence belongs to the bacterial CoaD family. Homohexamer. Mg(2+) is required as a cofactor.

The protein localises to the cytoplasm. The enzyme catalyses (R)-4'-phosphopantetheine + ATP + H(+) = 3'-dephospho-CoA + diphosphate. It functions in the pathway cofactor biosynthesis; coenzyme A biosynthesis; CoA from (R)-pantothenate: step 4/5. Reversibly transfers an adenylyl group from ATP to 4'-phosphopantetheine, yielding dephospho-CoA (dPCoA) and pyrophosphate. This chain is Phosphopantetheine adenylyltransferase, found in Treponema pallidum (strain Nichols).